Reading from the N-terminus, the 96-residue chain is Acylphosphatase (96 aa).

Residues 9–96 form the Acylphosphatase-like domain; the sequence is CAEIYVSGRV…DTFTDFFIKR (88 aa). Active-site residues include Arg24 and Asn42.

Belongs to the acylphosphatase family.

It catalyses the reaction an acyl phosphate + H2O = a carboxylate + phosphate + H(+). This Methanococcoides burtonii (strain DSM 6242 / NBRC 107633 / OCM 468 / ACE-M) protein is Acylphosphatase (acyP).